A 172-amino-acid chain; its full sequence is MPRSRINGNFIDKTSSIVANILLQIIPTTSGEKRAFTYYRDGAIMLAQSEGNYAEALQNYYEATRLEIDPYDRSYILYNIGLIHTSNGEHTKALEYYFRALERNPFLPQAFNNMAVICHYRGEQAILQGDSEIAEAWFDQAAEYWKQAIALTPGNYIEAQNWLKITKRFEFE.

TPR repeat units lie at residues 35–70 (AFTY…EIDP), 74–107 (SYIL…NPFL), and 122–155 (GEQA…TPGN).

Belongs to the Ycf3 family.

Its subcellular location is the plastid. It localises to the chloroplast thylakoid membrane. Essential for the assembly of the photosystem I (PSI) complex. May act as a chaperone-like factor to guide the assembly of the PSI subunits. The sequence is that of Photosystem I assembly protein Ycf3 from Sorghum bicolor (Sorghum).